The following is a 1253-amino-acid chain: Cytoplasmic FMR1-interacting protein 1 (1253 aa).

Ser-583 is modified (phosphoserine). A Phosphothreonine modification is found at Thr-1234.

Belongs to the CYFIP family. As to quaternary structure, component of the WAVE1 complex composed of ABI2, CYFIP1 or CYFIP2, BRK1, NCKAP1 and WASF1/WAVE1. Within the complex, a heterodimer containing NCKAP1 and CYFIP1 interacts with a heterotrimer formed by WAVE1, ABI2 and BRK1. Component of the CYFIP1-EIF4E-FMR1 complex which is composed of CYFIP, EIF4E and FMR1. Interacts with FMR1 but does not bind to related proteins FXR1 or FXR2. Interaction with EIF4E stimulates FMR1 binding. Component of the WAVE2 complex composed of ABI1, CYFIP1/SRA1, NCKAP1/NAP1 (NCKAP1l/HEM1 in hematopoietic cells) and WASF2/WAVE2. Interacts with the active GTP-bound form of RAC1. Interacts through its C-terminus with the C-terminus of DPYSL2/CRMP2 which is necessary for DPYSL2-induced axon outgrowth. Interacts with NYAP1, NYAP2 and MYO16. Interacts with TMEM108 (via N-terminus); the interaction associates TMEM108 with the WAVE1 complex.

Its subcellular location is the cytoplasm. The protein resides in the perinuclear region. The protein localises to the cell projection. It localises to the lamellipodium. It is found in the ruffle. Its subcellular location is the synapse. The protein resides in the synaptosome. Functionally, component of the CYFIP1-EIF4E-FMR1 complex which binds to the mRNA cap and mediates translational repression. In the CYFIP1-EIF4E-FMR1 complex this subunit is an adapter between EIF4E and FMR1. Promotes the translation repression activity of FMR1 in brain probably by mediating its association with EIF4E and mRNA. Regulates formation of membrane ruffles and lamellipodia. Plays a role in axon outgrowth. Binds to F-actin but not to RNA. Part of the WAVE complex that regulates actin filament reorganization via its interaction with the Arp2/3 complex. Actin remodeling activity is regulated by RAC1. Regulator of epithelial morphogenesis. As component of the WAVE1 complex, required for BDNF-NTRK2 endocytic trafficking and signaling from early endosomes. May act as an invasion suppressor in cancers. This Homo sapiens (Human) protein is Cytoplasmic FMR1-interacting protein 1.